Consider the following 437-residue polypeptide: Matrix remodeling-associated protein 8 (437 aa).

Positions M1–L22 are cleaved as a signal peptide. Residues Y23 to Q339 are Extracellular-facing. Ig-like V-type domains lie at P32–T159 and E167–T294. 4 N-linked (GlcNAc...) asparagine glycosylation sites follow: N41, N121, N246, and N304. 2 disulfides stabilise this stretch: C54–C139 and C188–C274. The helical transmembrane segment at L340–I360 threads the bilayer. The Cytoplasmic segment spans residues T361–K437.

In terms of assembly, homodimer in cis. Does not appear to form trans-homodimers.

The protein localises to the cell membrane. Functionally, transmembrane protein which can modulate activity of various signaling pathways, probably via binding to integrin ITGAV:ITGB3. Mediates heterophilic cell-cell interactions in vitro. This is Matrix remodeling-associated protein 8 (MXRA8) from Gallus gallus (Chicken).